We begin with the raw amino-acid sequence, 124 residues long: Small ribosomal subunit protein uS12 (124 aa).

The segment at M1–P28 is disordered. The segment covering R9–K18 has biased composition (basic residues). At D89 the chain carries 3-methylthioaspartic acid.

It belongs to the universal ribosomal protein uS12 family. As to quaternary structure, part of the 30S ribosomal subunit. Contacts proteins S8 and S17. May interact with IF1 in the 30S initiation complex.

Its function is as follows. With S4 and S5 plays an important role in translational accuracy. Functionally, interacts with and stabilizes bases of the 16S rRNA that are involved in tRNA selection in the A site and with the mRNA backbone. Located at the interface of the 30S and 50S subunits, it traverses the body of the 30S subunit contacting proteins on the other side and probably holding the rRNA structure together. The combined cluster of proteins S8, S12 and S17 appears to hold together the shoulder and platform of the 30S subunit. In Paenarthrobacter aurescens (strain TC1), this protein is Small ribosomal subunit protein uS12.